A 636-amino-acid chain; its full sequence is 3-phosphoinositide-dependent protein kinase 1 (636 aa).

Composition is skewed to low complexity over residues 1–20 (MEDL…NNDT) and 27–37 (APTTLNLTPTA). The interval 1–45 (MEDLTPTNTSLDTTTTNNDTTSDREAAPTTLNLTPTASESENSLS) is disordered. A Protein kinase domain is found at 69-364 (FMFLQSMGEG…SQELMAHKFF (296 aa)). Residues 79-81 (AYS) and lysine 98 contribute to the ATP site. The tract at residues 100–149 (LQKSYLNRHQKMDAIIREKNILTYLSQECGGHPFVTQLYTHFHDQARIYF) is PIF-pocket. ATP-binding positions include 152 to 154 (GLV) and aspartate 158. Aspartate 197 functions as the Proton acceptor in the catalytic mechanism. Residues aspartate 201 and aspartate 215 each contribute to the ATP site. Disordered regions lie at residues 233–264 (TDAN…EENT) and 593–636 (KKSR…KKSP). The stretch at 550-631 (DLEKKADEWC…QVSKKLSMQM (82 aa)) forms a coiled coil. The span at 597–624 (KEMMREQKALRRKQEKEEKKALKAEQVS) shows a compositional bias: basic and acidic residues.

This sequence belongs to the protein kinase superfamily. AGC Ser/Thr protein kinase family. PDPK1 subfamily. As to quaternary structure, interacts directly with sgk-1, akt-1 and akt-2.

It is found in the cytoplasm. It carries out the reaction L-seryl-[protein] + ATP = O-phospho-L-seryl-[protein] + ADP + H(+). It catalyses the reaction L-threonyl-[protein] + ATP = O-phospho-L-threonyl-[protein] + ADP + H(+). In terms of biological role, involved in the daf-2/insulin receptor-like transduction pathway, which controls longevity and prevents developmental arrest at the dauer stage. Phosphorylates and activates sgk-1, akt-1 and akt-2. The protein is 3-phosphoinositide-dependent protein kinase 1 of Caenorhabditis elegans.